We begin with the raw amino-acid sequence, 383 residues long: Succinyl-diaminopimelate desuccinylase (383 aa).

Residue histidine 74 coordinates Zn(2+). Aspartate 76 is an active-site residue. Zn(2+) is bound at residue aspartate 107. The active-site Proton acceptor is glutamate 141. Positions 142, 170, and 356 each coordinate Zn(2+).

It belongs to the peptidase M20A family. DapE subfamily. As to quaternary structure, homodimer. Requires Zn(2+) as cofactor. Co(2+) is required as a cofactor.

The enzyme catalyses N-succinyl-(2S,6S)-2,6-diaminopimelate + H2O = (2S,6S)-2,6-diaminopimelate + succinate. It participates in amino-acid biosynthesis; L-lysine biosynthesis via DAP pathway; LL-2,6-diaminopimelate from (S)-tetrahydrodipicolinate (succinylase route): step 3/3. In terms of biological role, catalyzes the hydrolysis of N-succinyl-L,L-diaminopimelic acid (SDAP), forming succinate and LL-2,6-diaminopimelate (DAP), an intermediate involved in the bacterial biosynthesis of lysine and meso-diaminopimelic acid, an essential component of bacterial cell walls. This chain is Succinyl-diaminopimelate desuccinylase, found in Cupriavidus taiwanensis (strain DSM 17343 / BCRC 17206 / CCUG 44338 / CIP 107171 / LMG 19424 / R1) (Ralstonia taiwanensis (strain LMG 19424)).